Consider the following 826-residue polypeptide: Villin-1 (826 aa).

The tract at residues 1–734 (MVELSKKVTG…YDELKAELGD (734 aa)) is core. One copy of the Gelsolin-like 1 repeat lies at 27–76 (MEMVPVPTKSYGNFYEGDCYVLLSTRKTGSGFSYNIHYWLGKNSSQDEQG). 112-119 (KQGLIYKQ) is an a 1,2-diacyl-sn-glycero-3-phospho-(1D-myo-inositol-4,5-bisphosphate) binding site. The tract at residues 129 to 137 (VETNTYNVQ) is crucial for binding an actin filament. An a 1,2-diacyl-sn-glycero-3-phospho-(1D-myo-inositol-4,5-bisphosphate)-binding site is contributed by 138-146 (RLLHVKGKK). 5 Gelsolin-like repeats span residues 148-188 (VVAA…AERL), 265-309 (LVIQ…EEKQ), 408-457 (QELV…DELA), 528-568 (TKAF…DERE), and 631-672 (FLAT…SEKE). Residues 735–826 (NASIGQLVSG…QNLKKEKGLF (92 aa)) are headpiece. Positions 760–826 (PTKLETFPLD…QNLKKEKGLF (67 aa)) constitute an HP domain. Residues 820 to 823 (KKEK) form an absolutely required for activity region.

This sequence belongs to the villin/gelsolin family. As to quaternary structure, monomer. Homodimer. Associates with F-actin; the association with F-actin is inhibited by tropomyosin. Phosphorylated on tyrosine residues. The unphosphorylated form increases the initial rate of actin-nucleating activity, whereas the tyrosine-phosphorylated form inhibits actin-nucleating activity, enhances actin-bundling activity and enhances actin-severing activity by reducing high Ca(2+) requirements. The tyrosine-phosphorylated form does not regulate actin-capping activity. Tyrosine phosphorylation is essential for cell migration: tyrosine phosphorylation sites in the N-terminus half regulate actin reorganization and cell morphology, whereas tyrosine phosphorylation sites in the C-terminus half regulate cell migration. Tyrosine phosphorylation is induced by epidermal growth factor (EGF) and stimulates cell migration. Specifically expressed in epithelial cells. Component of brush border microvilli.

The protein localises to the cytoplasm. Its subcellular location is the cytoskeleton. The protein resides in the cell projection. It localises to the microvillus. It is found in the lamellipodium. The protein localises to the ruffle. Its subcellular location is the filopodium tip. The protein resides in the filopodium. Functionally, epithelial cell-specific Ca(2+)-regulated actin-modifying protein that modulates the reorganization of microvillar actin filaments. Plays a role in the actin nucleation, actin filament bundle assembly, actin filament capping and severing. Binds phosphatidylinositol 4,5-bisphosphate (PIP2) and lysophosphatidic acid (LPA); binds LPA with higher affinity than PIP2. Binding to LPA increases its phosphorylation by SRC and inhibits all actin-modifying activities. Binding to PIP2 inhibits actin-capping and -severing activities but enhances actin-bundling activity. Regulates the intestinal epithelial cell morphology, cell invasion, cell migration and apoptosis. Protects against apoptosis induced by dextran sodium sulfate (DSS) in the gastrointestinal epithelium. Appears to regulate cell death by maintaining mitochondrial integrity. Enhances hepatocyte growth factor (HGF)-induced epithelial cell motility, chemotaxis and wound repair. Its actin-bundling activity is inhibited by tropomyosin. This is Villin-1 (VIL1) from Gallus gallus (Chicken).